A 448-amino-acid polypeptide reads, in one-letter code: Probable D-serine dehydratase (448 aa).

Position 111 is an N6-(pyridoxal phosphate)lysine (Lys111).

The protein belongs to the serine/threonine dehydratase family. DsdA subfamily. Requires pyridoxal 5'-phosphate as cofactor.

It carries out the reaction D-serine = pyruvate + NH4(+). This Rhizobium etli (strain CIAT 652) protein is Probable D-serine dehydratase.